A 136-amino-acid chain; its full sequence is Peptide methionine sulfoxide reductase MsrB (136 aa).

The MsrB domain maps to 9–136 (DAEWKALLAE…NSASLDFKKK (128 aa)). Zn(2+) is bound by residues Cys53, Cys56, Cys102, and Cys105. Residue Cys125 is the Nucleophile of the active site.

It belongs to the MsrB Met sulfoxide reductase family. The cofactor is Zn(2+).

The catalysed reaction is L-methionyl-[protein] + [thioredoxin]-disulfide + H2O = L-methionyl-(R)-S-oxide-[protein] + [thioredoxin]-dithiol. This chain is Peptide methionine sulfoxide reductase MsrB, found in Variovorax paradoxus (strain S110).